Reading from the N-terminus, the 379-residue chain is MLKPPLPLRSLLFLQLPLLGVGLNPKFLTPSGNEDIGGKPGTGGDFFLTSTPAGTLDVSTLPLPKVQCFVFNVEYMNCTWNSSSEPQPNNLTLHYGYRNFNGDDKLQECGHYLFSEGITSGCWFGKKEIRLYETFVVQLQDPREHRKQPKQMLKLQDLVIPWAPENLTLRNLSEFQLELSWSNRYLDHCLEHLVQYRSDRDRSWTEQSVDHRHSFSLPSVDAQKLYTFRVRSRYNPLCGSAQHWSDWSYPIHWGSNTSKENIENPENPSLFALEAVLIPLGSMGLIVSLICVYCWLERTMPRIPTLKNLEDLVTEYQGNFSAWSGVSKGLAESLQPDYSERLCHVSEIPPKGGEGPGGSPCSQHSPYWAPPCYTLKPEP.

The signal sequence occupies residues 1–22 (MLKPPLPLRSLLFLQLPLLGVG). Residues 23 to 269 (LNPKFLTPSG…ENIENPENPS (247 aa)) lie on the Extracellular side of the membrane. Cys68 and Cys78 are oxidised to a cystine. Residues Asn77, Asn81, and Asn90 are each glycosylated (N-linked (GlcNAc...) asparagine). A disulfide bond links Cys109 and Cys122. Residues 163 to 260 (APENLTLRNL…IHWGSNTSKE (98 aa)) enclose the Fibronectin type-III domain. N-linked (GlcNAc...) asparagine glycans are attached at residues Asn166 and Asn171. A WSXWS motif motif is present at residues 244–248 (WSDWS). Residues 270-290 (LFALEAVLIPLGSMGLIVSLI) traverse the membrane as a helical segment. The Cytoplasmic portion of the chain corresponds to 291-379 (CVYCWLERTM…PPCYTLKPEP (89 aa)). The Box 1 motif signature appears at 299-307 (TMPRIPTLK). Phosphothreonine is present on Thr305. The segment at 349–370 (PPKGGEGPGGSPCSQHSPYWAP) is disordered.

The protein belongs to the type I cytokine receptor family. Type 5 subfamily. In terms of assembly, the gamma subunit is common to the IL2, IL4, IL7, IL15, IL21 and probably also the IL13 receptors. Interacts with SHB upon interleukin stimulation.

It is found in the cell membrane. The protein resides in the cell surface. In terms of biological role, common subunit for the receptors for a variety of interleukins. Probably in association with IL15RA, involved in the stimulation of neutrophil phagocytosis by IL15. The polypeptide is Cytokine receptor common subunit gamma (IL2RG) (Bos taurus (Bovine)).